Consider the following 95-residue polypeptide: Protein TusB (95 aa).

The protein belongs to the DsrH/TusB family. In terms of assembly, heterohexamer, formed by a dimer of trimers. The hexameric TusBCD complex contains 2 copies each of TusB, TusC and TusD. The TusBCD complex interacts with TusE.

Its subcellular location is the cytoplasm. Functionally, part of a sulfur-relay system required for 2-thiolation of 5-methylaminomethyl-2-thiouridine (mnm(5)s(2)U) at tRNA wobble positions. This is Protein TusB from Escherichia fergusonii (strain ATCC 35469 / DSM 13698 / CCUG 18766 / IAM 14443 / JCM 21226 / LMG 7866 / NBRC 102419 / NCTC 12128 / CDC 0568-73).